We begin with the raw amino-acid sequence, 70 residues long: Large ribosomal subunit protein bL31 (70 aa).

Zn(2+) contacts are provided by Cys16, Cys18, Cys37, and Cys40.

This sequence belongs to the bacterial ribosomal protein bL31 family. Type A subfamily. Part of the 50S ribosomal subunit. Zn(2+) serves as cofactor.

Functionally, binds the 23S rRNA. This is Large ribosomal subunit protein bL31 from Glaesserella parasuis serovar 5 (strain SH0165) (Haemophilus parasuis).